Here is an 814-residue protein sequence, read N- to C-terminus: Rho GTPase-activating protein 26 (814 aa).

In terms of domain architecture, BAR spans Glu7–Thr262. The PH domain maps to Pro265–Pro369. In terms of domain architecture, Rho-GAP spans Ala383–Phe568. Disordered stretches follow at residues Ser584 to Ser618 and Ser638 to Ser696. 2 stretches are compositionally biased toward low complexity: residues Ser591–Pro600 and Ser638–Ser661. A compositionally biased stretch (pro residues) spans Ser662–Pro672. Phosphoserine is present on Ser668. A Phosphothreonine modification is found at Thr670. At Ser671 the chain carries Phosphoserine. Over residues Leu673–Ser696 the composition is skewed to low complexity. In terms of domain architecture, SH3 spans Thr756–Leu814.

As to quaternary structure, interacts with NYAP1, NYAP2 and MYO16. Interacts with MICAL1 and WDR44. Binds to the C-terminus of PTK2/FAK1. Post-translationally, phosphorylated in a PINK1-dependent fashion promoting retrograde mitochondrial trafficking and clustering.

It is found in the cell junction. The protein localises to the focal adhesion. Its subcellular location is the cytoplasm. It localises to the cytoskeleton. The protein resides in the endosome membrane. GTPase-activating protein for RHOA and CDC42. Facilitates mitochondrial quality control by promoting Parkin-mediated recruitment of autophagosomes to damaged mitochondria. Associates with MICAL1 on the endosomal membrane to promote Rab8-Rab10-dependent tubule extension. After dissociation of MICAL1, recruits WDR44 which connects the endoplasmic reticulum (ER) with the endosomal tubule, thereby participating in the export of a subset of neosynthesized proteins. The chain is Rho GTPase-activating protein 26 (Arhgap26) from Mus musculus (Mouse).